A 152-amino-acid chain; its full sequence is Small ribosomal subunit protein uS13z/uS13y/uS13x (152 aa).

Position 2 is an N-acetylserine (S2).

It belongs to the universal ribosomal protein uS13 family.

It is found in the cytoplasm. In terms of biological role, located at the top of the head of the 40S subunit, it contacts several helices of the 18S rRNA. The protein is Small ribosomal subunit protein uS13z/uS13y/uS13x (RPS18A) of Arabidopsis thaliana (Mouse-ear cress).